Here is a 490-residue protein sequence, read N- to C-terminus: Metal cation symporter ZIP14 (490 aa).

The signal sequence occupies residues 1–28 (MKLLHPAFQSCLLLTLLGLWRTTPEAHA). Topologically, residues 29 to 155 (SSPGAPAISA…PSAVEVWGYG (127 aa)) are extracellular. N-linked (GlcNAc...) asparagine glycans are attached at residues Asn75, Asn85, and Asn100. Residues 156–176 (LLCVTVISLCSLLGASVVPFM) form a helical membrane-spanning segment. Residues 177 to 184 (KKTFYKRL) lie on the Cytoplasmic side of the membrane. Residues 185 to 205 (LLYFIALAIGTLYSNALFQLI) traverse the membrane as a helical segment. The Extracellular portion of the chain corresponds to 206-222 (PEAFGFNPLEDYYVSKS). The helical transmembrane segment at 223 to 243 (AVVFGGFYLFFFTEKILKILL) threads the bilayer. The Cytoplasmic segment spans residues 244–395 (KQKNEHHHGH…LLNAGMSIQQ (152 aa)). An HHHGHXHX-motif motif is present at residues 249-256 (HHHGHSHY). The XEXPHE-motif motif lies at 374-379 (EEFPHE). Residues 396 to 416 (ALFFNFLSACCCYLGLAFGIL) traverse the membrane as a helical segment. Residues 417-422 (AGSHFS) lie on the Extracellular side of the membrane. Residues 423 to 443 (ANWIFALAGGMFLYISLADMF) traverse the membrane as a helical segment. Topologically, residues 444–458 (PEMNEVCQEDERKGS) are cytoplasmic. A helical transmembrane segment spans residues 459 to 479 (ILIPFVIQNLGLLTGFTIMVV). Residues 480-490 (LTMYSGQIQIG) lie on the Extracellular side of the membrane.

It belongs to the ZIP transporter (TC 2.A.5) family. Homotrimer. In terms of processing, ubiquitinated. Ubiquitination occurs upon iron depletion. The ubiquitinated form undergoes proteasomal degradation. Post-translationally, N-glycosylated. N-glycosylation at Asn-100 is required for iron-regulated extraction of the transporter from membranes and subsequent proteasomal degradation.

It is found in the cell membrane. The protein localises to the apical cell membrane. The protein resides in the basolateral cell membrane. It localises to the early endosome membrane. Its subcellular location is the late endosome membrane. It is found in the lysosome membrane. It carries out the reaction Zn(2+)(out) + 2 hydrogencarbonate(out) = Zn(2+)(in) + 2 hydrogencarbonate(in). It catalyses the reaction Mn(2+)(out) + 2 hydrogencarbonate(out) = Mn(2+)(in) + 2 hydrogencarbonate(in). The catalysed reaction is Fe(2+)(out) + 2 hydrogencarbonate(out) = Fe(2+)(in) + 2 hydrogencarbonate(in). The enzyme catalyses Cd(2+)(out) + 2 hydrogencarbonate(out) = Cd(2+)(in) + 2 hydrogencarbonate(in). Electroneutral transporter of the plasma membrane mediating the cellular uptake of the divalent metal cations zinc, manganese and iron that are important for tissue homeostasis, metabolism, development and immunity. Functions as an energy-dependent symporter, transporting through the membranes an electroneutral complex composed of a divalent metal cation and two bicarbonate anions. Beside these endogenous cellular substrates, can also import cadmium a non-essential metal which is cytotoxic and carcinogenic. Controls the cellular uptake by the intestinal epithelium of systemic zinc, which is in turn required to maintain tight junctions and the intestinal permeability. Modifies the activity of zinc-dependent phosphodiesterases, thereby indirectly regulating G protein-coupled receptor signaling pathways important for gluconeogenesis and chondrocyte differentiation. Regulates insulin receptor signaling, glucose uptake, glycogen synthesis and gluconeogenesis in hepatocytes through the zinc-dependent intracellular catabolism of insulin. Through zinc cellular uptake also plays a role in the adaptation of cells to endoplasmic reticulum stress. Major manganese transporter of the basolateral membrane of intestinal epithelial cells, it plays a central role in manganese systemic homeostasis through intestinal manganese uptake. Also involved in manganese extracellular uptake by cells of the blood-brain barrier. May also play a role in manganese and zinc homeostasis participating in their elimination from the blood through the hepatobiliary excretion. Also functions in the extracellular uptake of free iron. May also function intracellularly and mediate the transport from endosomes to cytosol of iron endocytosed by transferrin. Plays a role in innate immunity by regulating the expression of cytokines by activated macrophages. The sequence is that of Metal cation symporter ZIP14 from Pongo abelii (Sumatran orangutan).